We begin with the raw amino-acid sequence, 188 residues long: Elongation factor P (188 aa).

Belongs to the elongation factor P family.

The protein localises to the cytoplasm. It functions in the pathway protein biosynthesis; polypeptide chain elongation. Functionally, involved in peptide bond synthesis. Stimulates efficient translation and peptide-bond synthesis on native or reconstituted 70S ribosomes in vitro. Probably functions indirectly by altering the affinity of the ribosome for aminoacyl-tRNA, thus increasing their reactivity as acceptors for peptidyl transferase. The protein is Elongation factor P of Christiangramia forsetii (strain DSM 17595 / CGMCC 1.15422 / KT0803) (Gramella forsetii).